The chain runs to 325 residues: Heat-inducible transcription repressor HrcA (325 aa).

The protein belongs to the HrcA family.

Its function is as follows. Negative regulator of class I heat shock genes (grpE-dnaK-dnaJ and groELS operons). Prevents heat-shock induction of these operons. This chain is Heat-inducible transcription repressor HrcA, found in Staphylococcus aureus (strain USA300).